Here is a 448-residue protein sequence, read N- to C-terminus: Inositol polyphosphate 5-phosphatase K (448 aa).

A catalytic region spans residues 16–318; sequence IHVVTWNVAS…SDHKPVSGTF (303 aa). The interval 318 to 448 is required for interaction with GPR78 and PAK1; that stretch reads FDLELKPLVS…DPLGEAQPQI (131 aa). The tract at residues 321–448 is required for ruffle localization; that stretch reads ELKPLVSAPL…DPLGEAQPQI (128 aa).

It belongs to the inositol 1,4,5-trisphosphate 5-phosphatase type II family. As to quaternary structure, interacts with GPR78; necessary for INPP5K localization at the endoplasmic reticulum. Interacts with PAK1; competes with GPR78. In terms of tissue distribution, ubiquitously expressed with highest levels in skeletal muscle, heart and kidney.

The protein localises to the endoplasmic reticulum. It is found in the cytoplasm. The catalysed reaction is 1D-myo-inositol 1,4,5-trisphosphate + H2O = 1D-myo-inositol 1,4-bisphosphate + phosphate. The enzyme catalyses 1D-myo-inositol 1,3,4,5-tetrakisphosphate + H2O = 1D-myo-inositol 1,3,4-trisphosphate + phosphate. It carries out the reaction a 1,2-diacyl-sn-glycero-3-phospho-(1D-myo-inositol-4,5-bisphosphate) + H2O = a 1,2-diacyl-sn-glycero-3-phospho-(1D-myo-inositol 4-phosphate) + phosphate. It catalyses the reaction a 1,2-diacyl-sn-glycero-3-phospho-(1D-myo-inositol-3,4,5-trisphosphate) + H2O = a 1,2-diacyl-sn-glycero-3-phospho-(1D-myo-inositol-3,4-bisphosphate) + phosphate. The catalysed reaction is 1,2-dioctanoyl-sn-glycero-3-phospho-(1D-myo-inositol-3,4,5-trisphosphate) + H2O = 1,2-dioctanoyl-sn-glycero-3-phospho-(1D-myo-inositol-3,4-bisphosphate) + phosphate. In terms of biological role, inositol 5-phosphatase which acts on inositol 1,4,5-trisphosphate, inositol 1,3,4,5-tetrakisphosphate, phosphatidylinositol 4,5-bisphosphate and phosphatidylinositol 3,4,5-trisphosphate. Has 6-fold higher affinity for phosphatidylinositol 4,5-bisphosphate than for inositol 1,4,5-trisphosphate. Negatively regulates assembly of the actin cytoskeleton. Controls insulin-dependent glucose uptake among inositol 3,4,5-trisphosphate phosphatases; therefore, is the specific regulator for insulin signaling in skeletal muscle. The polypeptide is Inositol polyphosphate 5-phosphatase K (Homo sapiens (Human)).